Here is a 1336-residue protein sequence, read N- to C-terminus: Adhesion G protein-coupled receptor A2 (1336 aa).

The signal sequence occupies residues 1 to 33 (MGAGGRRMPVPPARLLLLPLLPCLLLLAPGTRG). Topologically, residues 34–769 (APGCPVPIRG…AGGSGAGLHP (736 aa)) are extracellular. N-linked (GlcNAc...) asparagine glycosylation is found at N84 and N101. LRR repeat units follow at residues 85–106 (GTITLLLSNNKITGLRNGSFLG), 109–130 (LLEKLDLRSNVISTVQPGAFLG), 133–154 (ELKRLDLSNNRIGCLTSETFQG), and 157–178 (RLLRLNISGNIYSSLQPGVFDE). N162 carries an N-linked (GlcNAc...) asparagine glycan. Residues 190-241 (EFLTCDCRLRWLLPWARNHSLQLSERTLCAYPSALHAHALSSLQESQLRCEG) enclose the LRRCT domain. One can recognise an Ig-like domain in the interval 247-344 (THYLIPSLRQ…GNTSKKVEIV (98 aa)). The cysteines at positions 268 and 328 are disulfide-linked. N275 carries N-linked (GlcNAc...) asparagine glycosylation. The RGD signature appears at 362–364 (RGD). In terms of domain architecture, GAIN-B spans 594–757 (FRCTTGRPNI…AVLMELNAFP (164 aa)). Residues N602, N691, and N735 are each glycosylated (N-linked (GlcNAc...) asparagine). Residues 711–757 (AAWWNQDGPGGWSSEGCRLRYSQPNVSSLYCQHLGNVAVLMELNAFP) form a GPS region. C727 and C741 are oxidised to a cystine. A helical membrane pass occupies residues 770 to 790 (VVYPCTALLLLCLFSTIITYI). The Cytoplasmic segment spans residues 791–805 (LNHSSIHVSRKGWHM). The helical transmembrane segment at 806-826 (LLNLCFHMAMTSAVFVGGVTL) threads the bilayer. Residues 827-830 (TNYQ) are Extracellular-facing. Residues 831–851 (MVCQAVGITLHYSSLSSLLWM) traverse the membrane as a helical segment. The Cytoplasmic portion of the chain corresponds to 852–884 (GVKARVLHKELSWRAPPLEEGEAAPPGPRPMLR). The helical transmembrane segment at 885 to 905 (FYLIAGGIPLIICGITAAVNI) threads the bilayer. Residues 906–922 (HNYRDHSPYCWLVWRPS) lie on the Extracellular side of the membrane. The helical transmembrane segment at 923–943 (LGAFYIPVALILPITWIYFLC) threads the bilayer. Residues 944-1016 (AGLHLRSHVA…DGVYSPGVQL (73 aa)) lie on the Cytoplasmic side of the membrane. A helical transmembrane segment spans residues 1017 to 1037 (GALMTTHFLYLAMWACGALAV). Over 1038–1044 (SQRWLPR) the chain is Extracellular. Residues 1045–1065 (VVCSCLYGVAASALGLFVFTH) traverse the membrane as a helical segment. Residues 1066 to 1336 (HCARRRDVRA…TGLWKSETTV (271 aa)) are Cytoplasmic-facing. Residues 1084–1095 (ASPSASHVPARA) are compositionally biased toward low complexity. Positions 1084–1310 (ASPSASHVPA…NGAPKGGKYE (227 aa)) are disordered. A Phosphoserine modification is found at S1104. The span at 1110–1124 (GPASLKSSPSGSSGR) shows a compositional bias: low complexity. Over residues 1133 to 1143 (TNLQVAQSQVC) the composition is skewed to polar residues. Over residues 1166 to 1186 (PRHHNNLHHGRRVHKSRAKGH) the composition is skewed to basic residues. Residues 1213–1234 (SSESGSLHNSPSDSYPGSSRNS) show a composition bias toward polar residues. A PDZ-binding motif is present at residues 1333–1336 (ETTV).

Belongs to the G-protein coupled receptor 2 family. Adhesion G-protein coupled receptor (ADGR) subfamily. As to quaternary structure, interacts with RECK; the interaction is direct. Interacts (via PDZ-binding motif) with DLG1 (via PDZ domains). The cleaved extracellular subunit interacts with the integrin heterodimer ITGAV:ITGB3. Post-translationally, glycosylated. Proteolytically cleaved into two subunits, an extracellular subunit and a seven-transmembrane subunit. Cleaved by thrombin (F2) and MMP1. Also cleaved by MMP9, with lower efficiency. Presence of the protein disulfide-isomerase P4HB at the cell surface is additionally required for shedding of the extracellular subunit, suggesting that the subunits are linked by disulfide bonds. Shedding is enhanced by the growth factor FGF2 and may promote cell survival during angiogenesis. Abundantly expressed in the vasculature of the developing embryo. Expression in normal adult tissues is specifically vascular with endothelial expression in CNS, including brain and retina and more widespread pericyte expression in the brain and organs, including the kidney, pancreas and corpus luteum.

The protein resides in the cell membrane. The protein localises to the cell projection. It localises to the filopodium. Its function is as follows. Endothelial receptor which functions together with RECK to enable brain endothelial cells to selectively respond to Wnt7 signals (WNT7A or WNT7B). Plays a key role in Wnt7-specific responses, such as endothelial cell sprouting and migration in the forebrain and neural tube, and establishment of the blood-brain barrier. Acts as a Wnt7-specific coactivator of canonical Wnt signaling: required to deliver RECK-bound Wnt7 to frizzled by assembling a higher-order RECK-ADGRA2-Fzd-LRP5-LRP6 complex. ADGRA2-tethering function does not rely on its G-protein coupled receptor (GPCR) structure but instead on its combined capacity to interact with RECK extracellularly and recruit the Dishevelled scaffolding protein intracellularly. Binds to the glycosaminoglycans heparin, heparin sulfate, chondroitin sulfate and dermatan sulfate. This Mus musculus (Mouse) protein is Adhesion G protein-coupled receptor A2.